Consider the following 446-residue polypeptide: Putative RNA-ligase (446 aa).

Belongs to the asfivirus M448R family.

Its subcellular location is the virion. The polypeptide is Putative RNA-ligase (African swine fever virus (isolate Tick/Malawi/Lil 20-1/1983) (ASFV)).